We begin with the raw amino-acid sequence, 363 residues long: tRNA N6-adenosine threonylcarbamoyltransferase (363 aa).

His-121 and His-125 together coordinate Fe cation. Substrate-binding positions include Leu-143–Gly-147, Asp-176, Gly-189, and Asn-287. Asp-315 contacts Fe cation.

It belongs to the KAE1 / TsaD family. It depends on Fe(2+) as a cofactor.

The protein resides in the cytoplasm. The enzyme catalyses L-threonylcarbamoyladenylate + adenosine(37) in tRNA = N(6)-L-threonylcarbamoyladenosine(37) in tRNA + AMP + H(+). Required for the formation of a threonylcarbamoyl group on adenosine at position 37 (t(6)A37) in tRNAs that read codons beginning with adenine. Is involved in the transfer of the threonylcarbamoyl moiety of threonylcarbamoyl-AMP (TC-AMP) to the N6 group of A37, together with TsaE and TsaB. TsaD likely plays a direct catalytic role in this reaction. This chain is tRNA N6-adenosine threonylcarbamoyltransferase, found in Rhodopseudomonas palustris (strain BisB5).